Consider the following 147-residue polypeptide: UPF0178 protein Nther_1836 (147 aa).

This sequence belongs to the UPF0178 family.

The sequence is that of UPF0178 protein Nther_1836 from Natranaerobius thermophilus (strain ATCC BAA-1301 / DSM 18059 / JW/NM-WN-LF).